The following is a 306-amino-acid chain: Pantothenate kinase (306 aa).

Gly-90–Ser-97 contacts ATP.

It belongs to the prokaryotic pantothenate kinase family.

The protein localises to the cytoplasm. It catalyses the reaction (R)-pantothenate + ATP = (R)-4'-phosphopantothenate + ADP + H(+). Its pathway is cofactor biosynthesis; coenzyme A biosynthesis; CoA from (R)-pantothenate: step 1/5. The polypeptide is Pantothenate kinase (Listeria welshimeri serovar 6b (strain ATCC 35897 / DSM 20650 / CCUG 15529 / CIP 8149 / NCTC 11857 / SLCC 5334 / V8)).